Here is a 142-residue protein sequence, read N- to C-terminus: Large ribosomal subunit protein uL11 (142 aa).

It belongs to the universal ribosomal protein uL11 family. Part of the ribosomal stalk of the 50S ribosomal subunit. Interacts with L10 and the large rRNA to form the base of the stalk. L10 forms an elongated spine to which L12 dimers bind in a sequential fashion forming a multimeric L10(L12)X complex. Post-translationally, one or more lysine residues are methylated.

Functionally, forms part of the ribosomal stalk which helps the ribosome interact with GTP-bound translation factors. This Bradyrhizobium sp. (strain BTAi1 / ATCC BAA-1182) protein is Large ribosomal subunit protein uL11.